We begin with the raw amino-acid sequence, 208 residues long: 3-demethoxyubiquinol 3-hydroxylase (208 aa).

Fe cation contacts are provided by glutamate 57, glutamate 87, histidine 90, glutamate 139, glutamate 171, and histidine 174.

This sequence belongs to the COQ7 family. Fe cation serves as cofactor.

The protein localises to the cell membrane. The catalysed reaction is a 5-methoxy-2-methyl-3-(all-trans-polyprenyl)benzene-1,4-diol + AH2 + O2 = a 3-demethylubiquinol + A + H2O. It functions in the pathway cofactor biosynthesis; ubiquinone biosynthesis. Functionally, catalyzes the hydroxylation of 2-nonaprenyl-3-methyl-6-methoxy-1,4-benzoquinol during ubiquinone biosynthesis. This is 3-demethoxyubiquinol 3-hydroxylase from Nitrosomonas eutropha (strain DSM 101675 / C91 / Nm57).